A 597-amino-acid polypeptide reads, in one-letter code: Arginine--tRNA ligase (597 aa).

Positions 138–148 match the 'HIGH' region motif; sequence ANPTGPMHVGH.

It belongs to the class-I aminoacyl-tRNA synthetase family. As to quaternary structure, monomer.

Its subcellular location is the cytoplasm. It carries out the reaction tRNA(Arg) + L-arginine + ATP = L-arginyl-tRNA(Arg) + AMP + diphosphate. This chain is Arginine--tRNA ligase, found in Nitrobacter hamburgensis (strain DSM 10229 / NCIMB 13809 / X14).